A 210-amino-acid polypeptide reads, in one-letter code: Late histone H1 (210 aa).

2 disordered regions span residues 1-21 and 86-210; these read MSAAKPKTAKKARAAPAHPPT and SFKL…AAKK. The region spanning 17-91 is the H15 domain; it reads AHPPTSQMVV…GASGSFKLGK (75 aa). Residues 104–113 show a composition bias toward basic residues; it reads AAAKKAKLAA. The span at 114-123 shows a compositional bias: basic and acidic residues; the sequence is KKKEQKEKKA. A compositionally biased stretch (basic residues) spans 124–210; it reads AKTKARKEKL…KPAAKKAAKK (87 aa).

The protein belongs to the histone H1/H5 family.

It localises to the nucleus. Its subcellular location is the chromosome. Its function is as follows. Histones H1 are necessary for the condensation of nucleosome chains into higher-order structures. The protein is Late histone H1 of Lytechinus pictus (Painted sea urchin).